We begin with the raw amino-acid sequence, 316 residues long: Ribosomal protein L11 methyltransferase (316 aa).

Thr-161, Gly-182, Asp-204, and Asn-249 together coordinate S-adenosyl-L-methionine.

Belongs to the methyltransferase superfamily. PrmA family.

The protein resides in the cytoplasm. It catalyses the reaction L-lysyl-[protein] + 3 S-adenosyl-L-methionine = N(6),N(6),N(6)-trimethyl-L-lysyl-[protein] + 3 S-adenosyl-L-homocysteine + 3 H(+). In terms of biological role, methylates ribosomal protein L11. The chain is Ribosomal protein L11 methyltransferase from Ruminiclostridium cellulolyticum (strain ATCC 35319 / DSM 5812 / JCM 6584 / H10) (Clostridium cellulolyticum).